A 446-amino-acid chain; its full sequence is Tubulin beta-2 chain (446 aa).

Glutamine 11, glutamate 69, serine 138, glycine 142, threonine 143, glycine 144, asparagine 204, and asparagine 226 together coordinate GTP. Glutamate 69 serves as a coordination point for Mg(2+). The tract at residues 426 to 446 (QEAGIDEEEEYEEEAPAEHEE) is disordered. Residues 429-440 (GIDEEEEYEEEA) show a composition bias toward acidic residues.

This sequence belongs to the tubulin family. Dimer of alpha and beta chains. A typical microtubule is a hollow water-filled tube with an outer diameter of 25 nm and an inner diameter of 15 nM. Alpha-beta heterodimers associate head-to-tail to form protofilaments running lengthwise along the microtubule wall with the beta-tubulin subunit facing the microtubule plus end conferring a structural polarity. Microtubules usually have 13 protofilaments but different protofilament numbers can be found in some organisms and specialized cells. The cofactor is Mg(2+).

The protein localises to the cytoplasm. It localises to the cytoskeleton. In terms of biological role, tubulin is the major constituent of microtubules, a cylinder consisting of laterally associated linear protofilaments composed of alpha- and beta-tubulin heterodimers. Microtubules grow by the addition of GTP-tubulin dimers to the microtubule end, where a stabilizing cap forms. Below the cap, tubulin dimers are in GDP-bound state, owing to GTPase activity of alpha-tubulin. In Hypocrea virens (Gliocladium virens), this protein is Tubulin beta-2 chain.